A 176-amino-acid polypeptide reads, in one-letter code: Adenylyl-sulfate kinase (176 aa).

Residue Gly-12–Ser-19 participates in ATP binding. The active-site Phosphoserine intermediate is the Ser-86.

It belongs to the APS kinase family.

The catalysed reaction is adenosine 5'-phosphosulfate + ATP = 3'-phosphoadenylyl sulfate + ADP + H(+). It participates in sulfur metabolism; hydrogen sulfide biosynthesis; sulfite from sulfate: step 2/3. In terms of biological role, catalyzes the synthesis of activated sulfate. This is Adenylyl-sulfate kinase from Gloeothece citriformis (strain PCC 7424) (Cyanothece sp. (strain PCC 7424)).